Here is a 121-residue protein sequence, read N- to C-terminus: Ribonuclease P protein component (121 aa).

The protein belongs to the RnpA family. In terms of assembly, consists of a catalytic RNA component (M1 or rnpB) and a protein subunit.

The catalysed reaction is Endonucleolytic cleavage of RNA, removing 5'-extranucleotides from tRNA precursor.. In terms of biological role, RNaseP catalyzes the removal of the 5'-leader sequence from pre-tRNA to produce the mature 5'-terminus. It can also cleave other RNA substrates such as 4.5S RNA. The protein component plays an auxiliary but essential role in vivo by binding to the 5'-leader sequence and broadening the substrate specificity of the ribozyme. The polypeptide is Ribonuclease P protein component (Oceanobacillus iheyensis (strain DSM 14371 / CIP 107618 / JCM 11309 / KCTC 3954 / HTE831)).